Reading from the N-terminus, the 205-residue chain is Probable GTP-binding protein EngB (205 aa).

An EngB-type G domain is found at 29–203; it reads QGAEIAFIGR…KAVLSQWFRS (175 aa). Residues 37 to 44, 64 to 68, 82 to 85, 149 to 152, and 182 to 184 each bind GTP; these read GRSNAGKS, GRTQM, DLPG, TKSD, and FSS. Mg(2+) is bound by residues Ser44 and Thr66.

It belongs to the TRAFAC class TrmE-Era-EngA-EngB-Septin-like GTPase superfamily. EngB GTPase family. Mg(2+) is required as a cofactor.

Necessary for normal cell division and for the maintenance of normal septation. This Coxiella burnetii (strain CbuG_Q212) (Coxiella burnetii (strain Q212)) protein is Probable GTP-binding protein EngB.